The following is a 284-amino-acid chain: Bifunctional protein FolD (284 aa).

Residues 165–167, serine 190, and isoleucine 231 each bind NADP(+); that span reads GRS.

It belongs to the tetrahydrofolate dehydrogenase/cyclohydrolase family. As to quaternary structure, homodimer.

It catalyses the reaction (6R)-5,10-methylene-5,6,7,8-tetrahydrofolate + NADP(+) = (6R)-5,10-methenyltetrahydrofolate + NADPH. The catalysed reaction is (6R)-5,10-methenyltetrahydrofolate + H2O = (6R)-10-formyltetrahydrofolate + H(+). It functions in the pathway one-carbon metabolism; tetrahydrofolate interconversion. Functionally, catalyzes the oxidation of 5,10-methylenetetrahydrofolate to 5,10-methenyltetrahydrofolate and then the hydrolysis of 5,10-methenyltetrahydrofolate to 10-formyltetrahydrofolate. The chain is Bifunctional protein FolD from Clostridium kluyveri (strain ATCC 8527 / DSM 555 / NBRC 12016 / NCIMB 10680 / K1).